The primary structure comprises 1124 residues: Angiopoietin-1 receptor (1124 aa).

Positions Met1–Gly22 are cleaved as a signal peptide. The Extracellular portion of the chain corresponds to Ala23–Leu748. The cysteines at positions 44 and 102 are disulfide-linked. One can recognise an Ig-like C2-type 1 domain in the interval Cys44 to Ser123. Residues Asn140 and Asn158 are each glycosylated (N-linked (GlcNAc...) asparagine). EGF-like domains follow at residues Arg210–Glu252, Ala254–Asn299, and Ala301–Glu341. Intrachain disulfides connect Cys211-Cys220, Cys224-Cys233, Cys227-Cys240, Cys242-Cys251, Cys255-Cys264, Cys268-Cys274, Cys280-Cys287, Cys289-Cys298, Cys302-Cys311, Cys315-Cys323, Cys317-Cys329, Cys331-Cys340, and Cys370-Cys424. An Ig-like C2-type 2 domain is found at Pro350–Ser440. N-linked (GlcNAc...) asparagine glycans are attached at residues Asn399, Asn438, Asn464, Asn560, Asn596, Asn649, and Asn691. Fibronectin type-III domains lie at Pro447–Ile541, Pro545–Asp636, and Gln641–Ser735. A helical membrane pass occupies residues Ile749–Ile769. The Cytoplasmic segment spans residues Leu770–Ala1124. One can recognise a Protein kinase domain in the interval Ile824–Leu1096. Residues Ile830–Val838 and Lys855 contribute to the ATP site. Phosphotyrosine; by autocatalysis is present on Tyr860. Asp964 functions as the Proton acceptor in the catalytic mechanism. Tyr992, Tyr1102, and Tyr1108 each carry phosphotyrosine; by autocatalysis.

It belongs to the protein kinase superfamily. Tyr protein kinase family. Tie subfamily. Homodimer. Heterodimer with TIE1. Interacts with ANGPT1, ANGPT2 and ANGPT4. At cell-cell contacts in quiescent cells, forms a signaling complex composed of ANGPT1 plus TEK molecules from two adjoining cells. In the absence of endothelial cell-cell contacts, interaction with ANGPT1 mediates contacts with the extracellular matrix. Interacts with PTPRB; this promotes endothelial cell-cell adhesion. Interacts with DOK2, GRB2, GRB7, GRB14, PIK3R1 and PTPN11/SHP2. Colocalizes with DOK2 at contacts with the extracellular matrix in migrating cells. Interacts (tyrosine phosphorylated) with TNIP2. Interacts (tyrosine phosphorylated) with SHC1 (via SH2 domain). In terms of processing, proteolytic processing leads to the shedding of the extracellular domain (soluble TIE-2 alias sTIE-2). Autophosphorylated on tyrosine residues in response to ligand binding. Autophosphorylation occurs in trans, i.e. one subunit of the dimeric receptor phosphorylates tyrosine residues on the other subunit. Autophosphorylation occurs in a sequential manner, where Tyr-992 in the kinase activation loop is phosphorylated first, followed by autophosphorylation at Tyr-1108 and at additional tyrosine residues. ANGPT1-induced phosphorylation is impaired during hypoxia, due to increased expression of ANGPT2. Phosphorylation is important for interaction with GRB14, PIK3R1 and PTPN11. Phosphorylation at Tyr-1102 is important for interaction with SHC1, GRB2 and GRB7. Phosphorylation at Tyr-1108 is important for interaction with DOK2 and for coupling to downstream signal transduction pathways in endothelial cells. Dephosphorylated by PTPRB. Post-translationally, ubiquitinated. The phosphorylated receptor is ubiquitinated and internalized, leading to its degradation. In terms of tissue distribution, detected in umbilical vein endothelial cells. Proteolytic processing gives rise to a soluble extracellular domain that is detected in blood plasma (at protein level). Predominantly expressed in endothelial cells and their progenitors, the angioblasts. Has been directly found in placenta and lung, with a lower level in umbilical vein endothelial cells, brain and kidney.

The protein resides in the cell membrane. The protein localises to the cell junction. Its subcellular location is the focal adhesion. It is found in the cytoplasm. It localises to the cytoskeleton. The protein resides in the secreted. It catalyses the reaction L-tyrosyl-[protein] + ATP = O-phospho-L-tyrosyl-[protein] + ADP + H(+). Angiopoietin binding leads to receptor dimerization and activation by autophosphorylation at Tyr-992 on the kinase activation loop. Inhibited by staurosporine, K252a, PP2, damnacanthal, SB203580, CEP-11207, CEP-11981 and CE-245677. Inhibited by triazine, thienopyrimidine and thiazolopyrimidine derivatives. Its function is as follows. Tyrosine-protein kinase that acts as a cell-surface receptor for ANGPT1, ANGPT2 and ANGPT4 and regulates angiogenesis, endothelial cell survival, proliferation, migration, adhesion and cell spreading, reorganization of the actin cytoskeleton, but also maintenance of vascular quiescence. Has anti-inflammatory effects by preventing the leakage of pro-inflammatory plasma proteins and leukocytes from blood vessels. Required for normal angiogenesis and heart development during embryogenesis. Required for post-natal hematopoiesis. After birth, activates or inhibits angiogenesis, depending on the context. Inhibits angiogenesis and promotes vascular stability in quiescent vessels, where endothelial cells have tight contacts. In quiescent vessels, ANGPT1 oligomers recruit TEK to cell-cell contacts, forming complexes with TEK molecules from adjoining cells, and this leads to preferential activation of phosphatidylinositol 3-kinase and the AKT1 signaling cascades. In migrating endothelial cells that lack cell-cell adhesions, ANGT1 recruits TEK to contacts with the extracellular matrix, leading to the formation of focal adhesion complexes, activation of PTK2/FAK and of the downstream kinases MAPK1/ERK2 and MAPK3/ERK1, and ultimately to the stimulation of sprouting angiogenesis. ANGPT1 signaling triggers receptor dimerization and autophosphorylation at specific tyrosine residues that then serve as binding sites for scaffold proteins and effectors. Signaling is modulated by ANGPT2 that has lower affinity for TEK, can promote TEK autophosphorylation in the absence of ANGPT1, but inhibits ANGPT1-mediated signaling by competing for the same binding site. Signaling is also modulated by formation of heterodimers with TIE1, and by proteolytic processing that gives rise to a soluble TEK extracellular domain. The soluble extracellular domain modulates signaling by functioning as decoy receptor for angiopoietins. TEK phosphorylates DOK2, GRB7, GRB14, PIK3R1; SHC1 and TIE1. The sequence is that of Angiopoietin-1 receptor from Homo sapiens (Human).